The chain runs to 147 residues: Spermidine export protein MdtJ (147 aa).

4 consecutive transmembrane segments (helical) span residues 1–21, 31–51, 54–74, and 81–101; these read MIYW…TLSM, TGHV…SLAV, VALG…ITIF, and ETLS…ILLV. Residues 105 to 117 are compositionally biased toward basic residues; it reads TRKPKQPNRHRGN. Positions 105 to 147 are disordered; it reads TRKPKQPNRHRGNRPPSVQGLKTQTTGHHKGVAVESGEHHAAA.

Belongs to the drug/metabolite transporter (DMT) superfamily. Small multidrug resistance (SMR) (TC 2.A.7.1) family. MdtJ subfamily. Forms a complex with MdtI.

Its subcellular location is the cell inner membrane. In terms of biological role, catalyzes the excretion of spermidine. This Yersinia pseudotuberculosis serotype IB (strain PB1/+) protein is Spermidine export protein MdtJ.